Here is a 179-residue protein sequence, read N- to C-terminus: Large ribosomal subunit protein uL6 (179 aa).

It belongs to the universal ribosomal protein uL6 family. Part of the 50S ribosomal subunit.

This protein binds to the 23S rRNA, and is important in its secondary structure. It is located near the subunit interface in the base of the L7/L12 stalk, and near the tRNA binding site of the peptidyltransferase center. This is Large ribosomal subunit protein uL6 from Chlorobaculum tepidum (strain ATCC 49652 / DSM 12025 / NBRC 103806 / TLS) (Chlorobium tepidum).